Here is a 232-residue protein sequence, read N- to C-terminus: 5'-methylthioadenosine/S-adenosylhomocysteine nucleosidase (232 aa).

E12 functions as the Proton acceptor in the catalytic mechanism. Residues G78, I152, and 173–174 each bind substrate; that span reads ME. D197 acts as the Proton donor in catalysis.

The protein belongs to the PNP/UDP phosphorylase family. MtnN subfamily. Homodimer.

The catalysed reaction is S-adenosyl-L-homocysteine + H2O = S-(5-deoxy-D-ribos-5-yl)-L-homocysteine + adenine. It catalyses the reaction S-methyl-5'-thioadenosine + H2O = 5-(methylsulfanyl)-D-ribose + adenine. The enzyme catalyses 5'-deoxyadenosine + H2O = 5-deoxy-D-ribose + adenine. Its pathway is amino-acid biosynthesis; L-methionine biosynthesis via salvage pathway; S-methyl-5-thio-alpha-D-ribose 1-phosphate from S-methyl-5'-thioadenosine (hydrolase route): step 1/2. Catalyzes the irreversible cleavage of the glycosidic bond in both 5'-methylthioadenosine (MTA) and S-adenosylhomocysteine (SAH/AdoHcy) to adenine and the corresponding thioribose, 5'-methylthioribose and S-ribosylhomocysteine, respectively. Also cleaves 5'-deoxyadenosine, a toxic by-product of radical S-adenosylmethionine (SAM) enzymes, into 5-deoxyribose and adenine. Thus, is required for in vivo function of the radical SAM enzymes biotin synthase and lipoic acid synthase, that are inhibited by 5'-deoxyadenosine accumulation. The chain is 5'-methylthioadenosine/S-adenosylhomocysteine nucleosidase from Klebsiella pneumoniae (strain 342).